Consider the following 461-residue polypeptide: Cysteine--tRNA ligase (461 aa).

Residue Cys29 participates in Zn(2+) binding. Positions 31–41 match the 'HIGH' region motif; the sequence is PTVYNYAHIGN. The Zn(2+) site is built by Cys214, His239, and Glu243. The 'KMSKS' region motif lies at 271–275; that stretch reads KMSKS. Lys274 lines the ATP pocket.

Belongs to the class-I aminoacyl-tRNA synthetase family. As to quaternary structure, monomer. Zn(2+) is required as a cofactor.

The protein resides in the cytoplasm. The catalysed reaction is tRNA(Cys) + L-cysteine + ATP = L-cysteinyl-tRNA(Cys) + AMP + diphosphate. This Hyphomonas neptunium (strain ATCC 15444) protein is Cysteine--tRNA ligase.